The chain runs to 216 residues: Uracil-DNA glycosylase (216 aa).

D59 serves as the catalytic Proton acceptor.

This sequence belongs to the uracil-DNA glycosylase (UDG) superfamily. UNG family.

Its subcellular location is the cytoplasm. The catalysed reaction is Hydrolyzes single-stranded DNA or mismatched double-stranded DNA and polynucleotides, releasing free uracil.. Functionally, excises uracil residues from the DNA which can arise as a result of misincorporation of dUMP residues by DNA polymerase or due to deamination of cytosine. This Staphylococcus epidermidis (strain ATCC 12228 / FDA PCI 1200) protein is Uracil-DNA glycosylase.